Reading from the N-terminus, the 253-residue chain is MEYVYLILFSIVSLILGSFSNVVIYRLPRKILLKNHFFYDIDSNRSMCPKCGNKISWYDNVPLLSYLLLHGKCRHCDEKISLSYFIVELSFFIIAFPIYWLSTDWVDSFVLLGLYFILFNLFVIDFKSMLLPNLLTYPIFMLAFIYVQQNPALTVESSIIGGFAAFIISYVSNFIVRLFKRIDVMGGGDIKLYTAIGTLIGVEFVPYLFLLSSIIAFIHWFFARVSCRYCLYIPLGPSIIISFVIVFFSIRLM.

Residues 4 to 24 (VYLILFSIVSLILGSFSNVVI) traverse the membrane as a helical segment. Positions 48, 51, 73, and 76 each coordinate Zn(2+). Transmembrane regions (helical) follow at residues 80 to 100 (ISLS…PIYW), 106 to 126 (VDSF…VIDF), 129 to 149 (MLLP…YVQQ), 159 to 179 (IIGG…VRLF), 198 to 218 (TLIG…IAFI), and 230 to 250 (CLYI…FFSI).

This sequence belongs to the peptidase A24 family. It depends on Zn(2+) as a cofactor.

It localises to the cell inner membrane. The catalysed reaction is Typically cleaves a -Gly-|-Phe- bond to release an N-terminal, basic peptide of 5-8 residues from type IV prepilin, and then N-methylates the new N-terminal amino group, the methyl donor being S-adenosyl-L-methionine.. In terms of biological role, plays an essential role in type IV pili and type II pseudopili formation by proteolytically removing the leader sequence from substrate proteins and subsequently monomethylating the alpha-amino group of the newly exposed N-terminal phenylalanine. The protein is Prepilin leader peptidase/N-methyltransferase (tcpJ) of Vibrio cholerae serotype O1 (strain ATCC 39315 / El Tor Inaba N16961).